The following is a 242-amino-acid chain: Interleukin-34 (242 aa).

The signal sequence occupies residues 1–20; that stretch reads MPRGFTWLRYLGIFLGVALG. Asparagine 76 carries N-linked (GlcNAc...) asparagine glycosylation. Residues 210-242 are disordered; that stretch reads TQLYPPPPWSPSSPPHSTGSVRPVRAQGEGLLP. The span at 213–223 shows a compositional bias: pro residues; the sequence is YPPPPWSPSSP.

This sequence belongs to the IL-34 family. In terms of assembly, homodimer. Interacts with CSF1R. In terms of tissue distribution, detected in the sinusoidal epithelium in the red pulp of spleen (at protein level). Predominantly expressed in spleen. Also detected in a range of other tissues including heart, brain, lung, liver, kidney, thymus, testis, ovary, small intestine, prostate and colon.

The protein resides in the secreted. Its function is as follows. Cytokine that promotes the proliferation, survival and differentiation of monocytes and macrophages. Promotes the release of pro-inflammatory chemokines, and thereby plays an important role in innate immunity and in inflammatory processes. Plays an important role in the regulation of osteoclast proliferation and differentiation, and in the regulation of bone resorption. Signaling via CSF1R and its downstream effectors stimulates phosphorylation of MAPK1/ERK2 AND MAPK3/ERK1. The protein is Interleukin-34 (IL34) of Homo sapiens (Human).